Here is a 486-residue protein sequence, read N- to C-terminus: Probable transporter MCH1 (486 aa).

The Cytoplasmic portion of the chain corresponds to 1-29 (MPLSKVEHYLSYHTRLLLPHVLSLQSSHR). The chain crosses the membrane as a helical span at residues 30 to 50 (VAYIFSLLSAVSTGFITLISL). Residues 51–67 (YSQPWQKHLNYSSWQIN) are Vacuolar-facing. Asn60 carries N-linked (GlcNAc...) asparagine glycosylation. The helical transmembrane segment at 68-88 (TIASMTNLGMYLTPPILGMIA) threads the bilayer. The Cytoplasmic segment spans residues 89-93 (DSHGP). The chain crosses the membrane as a helical span at residues 94–114 (ITLSLLAIIGFIPSYSYLAYV). Over 115–133 (FNHPELSLGGNGDSSFNLS) the chain is Vacuolar. N-linked (GlcNAc...) asparagine glycosylation is present at Asn131. Residues 134–154 (IICFVFIGISTSALYFSALLT) form a helical membrane-spanning segment. Residues 155–163 (CTKLYPHTK) are Cytoplasmic-facing. The helical transmembrane segment at 164–184 (LLSISLPTTCYGISSVVGSQL) threads the bilayer. Over 185-212 (LRIKWFWSSNASSSSSNSDLNLGRVFQT) the chain is Vacuolar. A glycan (N-linked (GlcNAc...) asparagine) is linked at Asn194. The chain crosses the membrane as a helical span at residues 213 to 233 (FALVYVVIGLLAWIATSVVSL). Topologically, residues 234–279 (LHFNEEQDNQKRLDDQTDVEQSPLLERSNHVQEKFTQTMLRIFSDP) are cytoplasmic. The residue at position 255 (Ser255) is a Phosphoserine. A helical transmembrane segment spans residues 280–300 (VTYILAVSILLSLGPLEMFIA). Residues 301–320 (NMGSLTNLLVQLDAPTLSTK) are Vacuolar-facing. The chain crosses the membrane as a helical span at residues 321-343 (LLSTYALSSTFTRLLTGIVADFF). The Cytoplasmic portion of the chain corresponds to 344-347 (AKKK). The chain crosses the membrane as a helical span at residues 348–368 (ISIKWILLTFLSLGVCAQLFL). Over 369–385 (LKMTSSASPWGLVPTGS) the chain is Vacuolar. The chain crosses the membrane as a helical span at residues 386–406 (LVGIVYGGLFTVYPTLVLLVW). The Cytoplasmic segment spans residues 407–413 (GERSFGT). A helical membrane pass occupies residues 414 to 434 (VYGSLLIAPAIGSMIFCMLYA). Residues 435–456 (KFYDSRCMSGGGDLRNPSCISA) lie on the Vacuolar side of the membrane. Residues 457–477 (VYKYSSIAFVVSAVLSAVVFW) form a helical membrane-spanning segment. At 478 to 486 (KLKSRKLRI) the chain is on the cytoplasmic side.

This sequence belongs to the major facilitator superfamily.

The protein localises to the vacuole membrane. In terms of biological role, probable transporter. Does not act in the transport of monocarboxylic acids across the plasma membrane. The polypeptide is Probable transporter MCH1 (MCH1) (Saccharomyces cerevisiae (strain ATCC 204508 / S288c) (Baker's yeast)).